Consider the following 451-residue polypeptide: Probable D-serine dehydratase (451 aa).

Position 119 is an N6-(pyridoxal phosphate)lysine (Lys-119).

This sequence belongs to the serine/threonine dehydratase family. DsdA subfamily. The cofactor is pyridoxal 5'-phosphate.

It carries out the reaction D-serine = pyruvate + NH4(+). This is Probable D-serine dehydratase from Acidovorax sp. (strain JS42).